The chain runs to 109 residues: SRA stem-loop-interacting RNA-binding protein, mitochondrial (109 aa).

S15 bears the Phosphoserine mark. The RRM domain maps to 19-103 (PVAFVRRIPW…RRPKLPQTSD (85 aa)). T101 is modified (phosphothreonine). S102 carries the phosphoserine modification.

In terms of tissue distribution, ubiquitously expressed, with highest level in heart, liver, skeletal muscle and testis.

Its subcellular location is the mitochondrion. The protein localises to the nucleus. In terms of biological role, RNA-binding protein that acts as a nuclear receptor corepressor. Probably acts by binding the SRA RNA, and repressing the SRA-mediated nuclear receptor coactivation. Binds the STR7 loop of SRA RNA. Also able to repress glucocorticoid (GR), androgen (AR), thyroid (TR) and VDR-mediated transactivation. The sequence is that of SRA stem-loop-interacting RNA-binding protein, mitochondrial (SLIRP) from Homo sapiens (Human).